A 498-amino-acid chain; its full sequence is Protein YhjJ (498 aa).

A signal peptide spans 1 to 24; it reads MQGTKIRLLAGGLLMMATAGYVQA.

It belongs to the peptidase M16 family.

It is found in the periplasm. In Escherichia coli (strain K12), this protein is Protein YhjJ (yhjJ).